The primary structure comprises 386 residues: 2-isopropylmalate synthase (386 aa).

In terms of domain architecture, Pyruvate carboxyltransferase spans Val-12–Tyr-265. Positions 21, 203, 205, and 239 each coordinate a divalent metal cation.

Belongs to the alpha-IPM synthase/homocitrate synthase family. In terms of assembly, homodimer. The cofactor is a divalent metal cation.

It carries out the reaction 3-methyl-2-oxobutanoate + acetyl-CoA + H2O = (2S)-2-isopropylmalate + CoA + H(+). It functions in the pathway amino-acid biosynthesis; L-leucine biosynthesis; L-leucine from 3-methyl-2-oxobutanoate: step 1/4. Functionally, catalyzes the condensation of the acetyl group of acetyl-CoA with 3-methyl-2-oxobutanoate (2-oxoisovalerate) to form 3-carboxy-3-hydroxy-4-methylpentanoate (2-isopropylmalate). Carries out the first step of the leucine biosynthesis pathway. This is 2-isopropylmalate synthase (leuA) from Sulfurisphaera tokodaii (strain DSM 16993 / JCM 10545 / NBRC 100140 / 7) (Sulfolobus tokodaii).